The following is a 352-amino-acid chain: Small glutamine-rich tetratricopeptide repeat-containing protein 2 (352 aa).

Residues 80–97 (PAAASSSSTAPAAAAATP) are compositionally biased toward low complexity. The tract at residues 80–103 (PAAASSSSTAPAAAAATPSDEDLA) is disordered. TPR repeat units follow at residues 105-138 (AEQL…NPNS), 140-172 (VYFS…DPKF), and 173-206 (GKAY…DPSN). Residues 217-236 (KEQLSSSSSSNANDATASRG) are disordered.

This sequence belongs to the SGT family.

In terms of biological role, co-chaperone that binds to the molecular chaperone Hsp70 and regulates Hsp70 ATPase activity. This chain is Small glutamine-rich tetratricopeptide repeat-containing protein 2, found in Mycosarcoma maydis (Corn smut fungus).